The sequence spans 474 residues: Lipoprotein lipase (474 aa).

The signal sequence occupies residues 1–27 (MESKALLLVALGVWLQSLTAFRGGVAA). The interaction with GPIHBP1 stretch occupies residues 32–53 (RDFSDIESKFALRTPEDTAEDT). A disulfide bond links cysteine 54 and cysteine 67. Asparagine 70 carries N-linked (GlcNAc...) asparagine glycosylation. 3'-nitrotyrosine is present on tyrosine 121. The Nucleophile role is filled by serine 159. The active-site Charge relay system is aspartate 183. A 3'-nitrotyrosine modification is found at tyrosine 191. Residues alanine 194, arginine 197, serine 199, and aspartate 202 each contribute to the Ca(2+) site. Cysteine 243 and cysteine 266 are oxidised to a cystine. Positions 243–266 (CNIGEAIRVIAEKGLGDVDQLVKC) are essential for determining substrate specificity. Histidine 268 serves as the catalytic Charge relay system. 2 disulfides stabilise this stretch: cysteine 291/cysteine 310 and cysteine 302/cysteine 305. One can recognise a PLAT domain in the interval 341 to 464 (FHYQVKIHFS…KGKDAAVFVK (124 aa)). Tyrosine 343 carries the 3'-nitrotyrosine modification. Residue asparagine 386 is glycosylated (N-linked (GlcNAc...) asparagine). The interval 417–421 (WSDWW) is important for interaction with lipoprotein particles. Positions 430–434 (KIRVK) are important for heparin binding. Residues 443-467 (IFCAREKVSHLQKGKDAAVFVKCHD) form an interaction with GPIHBP1 region. Cysteine 445 and cysteine 465 are oxidised to a cystine.

It belongs to the AB hydrolase superfamily. Lipase family. As to quaternary structure, homodimer. Interacts with GPIHBP1 with 1:1 stoichiometry. Interacts with APOC2; the interaction activates LPL activity in the presence of lipids. Interaction with heparan sulfate proteoglycans is required to protect LPL against loss of activity. Associates with lipoprotein particles in blood plasma. Interacts with LMF1 and SEL1L; interaction with SEL1L is required to prevent aggregation of newly synthesized LPL in the endoplasmic reticulum (ER), and for normal export of LPL from the ER to the extracellular space. Interacts with SORL1; SORL1 acts as a sorting receptor, promoting LPL localization to endosomes and later to lysosomes, leading to degradation of newly synthesized LPL. Tyrosine nitration after lipopolysaccharide (LPS) challenge down-regulates the lipase activity.

It is found in the cell membrane. Its subcellular location is the secreted. The protein localises to the extracellular space. The protein resides in the extracellular matrix. It carries out the reaction a triacylglycerol + H2O = a diacylglycerol + a fatty acid + H(+). It catalyses the reaction a 1,2-diacyl-sn-glycero-3-phosphocholine + H2O = a 2-acyl-sn-glycero-3-phosphocholine + a fatty acid + H(+). The enzyme catalyses 1,2,3-tri-(9Z-octadecenoyl)-glycerol + H2O = di-(9Z)-octadecenoylglycerol + (9Z)-octadecenoate + H(+). The catalysed reaction is 1,2-di-(9Z-octadecenoyl)-sn-glycero-3-phosphocholine + H2O = (9Z-octadecenoyl)-sn-glycero-3-phosphocholine + (9Z)-octadecenoate + H(+). It carries out the reaction 1,2,3-tributanoylglycerol + H2O = dibutanoylglycerol + butanoate + H(+). It catalyses the reaction 1,2-dihexadecanoyl-sn-glycero-3-phosphocholine + H2O = hexadecanoyl-sn-glycero-3-phosphocholine + hexadecanoate + H(+). The apolipoprotein APOC2 acts as a coactivator of LPL activity. Ca(2+) binding promotes protein stability and formation of the active homodimer. Interaction with GPIHBP1 protects LPL against inactivation by ANGPTL4. Key enzyme in triglyceride metabolism. Catalyzes the hydrolysis of triglycerides from circulating chylomicrons and very low density lipoproteins (VLDL), and thereby plays an important role in lipid clearance from the blood stream, lipid utilization and storage. Although it has both phospholipase and triglyceride lipase activities it is primarily a triglyceride lipase with low but detectable phospholipase activity. Mediates margination of triglyceride-rich lipoprotein particles in capillaries. Recruited to its site of action on the luminal surface of vascular endothelium by binding to GPIHBP1 and cell surface heparan sulfate proteoglycans. The chain is Lipoprotein lipase (Lpl) from Rattus norvegicus (Rat).